Consider the following 401-residue polypeptide: Formate-dependent phosphoribosylglycinamide formyltransferase (401 aa).

N(1)-(5-phospho-beta-D-ribosyl)glycinamide is bound by residues 22-23 and E82; that span reads EL. ATP is bound by residues R115, K157, 162–167, 197–200, and E205; these read SSGKGQ and EGFI. The 196-residue stretch at 120–315 folds into the ATP-grasp domain; the sequence is RLAAESLGLP…EFELHARAIL (196 aa). The Mg(2+) site is built by E274 and E286. Residues D293, K362, and 369-370 contribute to the N(1)-(5-phospho-beta-D-ribosyl)glycinamide site; that span reads RR.

The protein belongs to the PurK/PurT family. As to quaternary structure, homodimer.

It carries out the reaction N(1)-(5-phospho-beta-D-ribosyl)glycinamide + formate + ATP = N(2)-formyl-N(1)-(5-phospho-beta-D-ribosyl)glycinamide + ADP + phosphate + H(+). It participates in purine metabolism; IMP biosynthesis via de novo pathway; N(2)-formyl-N(1)-(5-phospho-D-ribosyl)glycinamide from N(1)-(5-phospho-D-ribosyl)glycinamide (formate route): step 1/1. Functionally, involved in the de novo purine biosynthesis. Catalyzes the transfer of formate to 5-phospho-ribosyl-glycinamide (GAR), producing 5-phospho-ribosyl-N-formylglycinamide (FGAR). Formate is provided by PurU via hydrolysis of 10-formyl-tetrahydrofolate. This Cupriavidus necator (strain ATCC 17699 / DSM 428 / KCTC 22496 / NCIMB 10442 / H16 / Stanier 337) (Ralstonia eutropha) protein is Formate-dependent phosphoribosylglycinamide formyltransferase.